A 274-amino-acid polypeptide reads, in one-letter code: Thiazole synthase (274 aa).

Residue lysine 111 is the Schiff-base intermediate with DXP of the active site. Residues glycine 172, 198–199 (AG), and 220–221 (NT) contribute to the 1-deoxy-D-xylulose 5-phosphate site.

Belongs to the ThiG family. As to quaternary structure, homotetramer. Forms heterodimers with either ThiH or ThiS.

The protein localises to the cytoplasm. The enzyme catalyses [ThiS sulfur-carrier protein]-C-terminal-Gly-aminoethanethioate + 2-iminoacetate + 1-deoxy-D-xylulose 5-phosphate = [ThiS sulfur-carrier protein]-C-terminal Gly-Gly + 2-[(2R,5Z)-2-carboxy-4-methylthiazol-5(2H)-ylidene]ethyl phosphate + 2 H2O + H(+). It participates in cofactor biosynthesis; thiamine diphosphate biosynthesis. In terms of biological role, catalyzes the rearrangement of 1-deoxy-D-xylulose 5-phosphate (DXP) to produce the thiazole phosphate moiety of thiamine. Sulfur is provided by the thiocarboxylate moiety of the carrier protein ThiS. In vitro, sulfur can be provided by H(2)S. The polypeptide is Thiazole synthase (Gloeobacter violaceus (strain ATCC 29082 / PCC 7421)).